A 208-amino-acid polypeptide reads, in one-letter code: Small ribosomal subunit protein uS4 (208 aa).

The S4 RNA-binding domain maps to 98–163; that stretch reads SRLDNVVYRA…LTPFVIARAV (66 aa).

The protein belongs to the universal ribosomal protein uS4 family. Part of the 30S ribosomal subunit. Contacts protein S5. The interaction surface between S4 and S5 is involved in control of translational fidelity.

Its function is as follows. One of the primary rRNA binding proteins, it binds directly to 16S rRNA where it nucleates assembly of the body of the 30S subunit. In terms of biological role, with S5 and S12 plays an important role in translational accuracy. This Acidothermus cellulolyticus (strain ATCC 43068 / DSM 8971 / 11B) protein is Small ribosomal subunit protein uS4.